Reading from the N-terminus, the 344-residue chain is MGATRARIAIDAMGGDHAPDEIVAGALRAQAELDADVLLVGDPDRLEASIKSHSDSVPVEIIPSEGLIEMNEEPISALRRKRKASINVAMDLVKKKKADAVVSAGHSGAAMAAALLRLGRIPGIDRPAIGGVFPTIIAGKPVLVLDVGANVDCRPAFLDQFATMGTIYSEYVLGTEAPKVGLLNIGEESCKGNEVSVQTYQLLEQNPHVDFIGNAEGRDVLSGQFDVIVCDGFTGNILLKFAEAVGEVALQILREELPRGIHGKVGTGILKPNLRRIKQRMDHAEHGGGLLLGVAGVCIISHGSSQAPSIFNAIRLAKEAADNQVSQRIQSCYQQTVTAASNGE.

The protein belongs to the PlsX family. As to quaternary structure, homodimer. Probably interacts with PlsY.

It localises to the cytoplasm. It catalyses the reaction a fatty acyl-[ACP] + phosphate = an acyl phosphate + holo-[ACP]. It functions in the pathway lipid metabolism; phospholipid metabolism. Its function is as follows. Catalyzes the reversible formation of acyl-phosphate (acyl-PO(4)) from acyl-[acyl-carrier-protein] (acyl-ACP). This enzyme utilizes acyl-ACP as fatty acyl donor, but not acyl-CoA. This Acaryochloris marina (strain MBIC 11017) protein is Phosphate acyltransferase.